Consider the following 462-residue polypeptide: Argininosuccinate lyase (462 aa).

It belongs to the lyase 1 family. Argininosuccinate lyase subfamily.

Its subcellular location is the cytoplasm. The catalysed reaction is 2-(N(omega)-L-arginino)succinate = fumarate + L-arginine. It participates in amino-acid biosynthesis; L-arginine biosynthesis; L-arginine from L-ornithine and carbamoyl phosphate: step 3/3. In Bacillus anthracis (strain A0248), this protein is Argininosuccinate lyase.